The following is a 438-amino-acid chain: Coiled-coil domain-containing protein 78 (438 aa).

2 coiled-coil regions span residues 74–105 (HLHEQHEAEIFQLKSEILRLESRVLELELRGD) and 217–246 (SCQGQLRQAEAENARLQLQLKKLKDEYVLR). The segment at 345-381 (FSHREDQHGGPGALLSSPKKRPGGASQGGTSEPQGLD) is disordered.

The protein belongs to the CCDC78 family. Expressed primarily in skeletal muscle.

Its subcellular location is the cytoplasm. The protein localises to the cytoskeleton. The protein resides in the microtubule organizing center. It localises to the centrosome. It is found in the centriole. Its subcellular location is the perinuclear region. The protein localises to the cell membrane. The protein resides in the sarcolemma. It localises to the sarcoplasmic reticulum. Functionally, component of the deuterosome, a structure that promotes de novo centriole amplification in multiciliated cells that can generate more than 100 centrioles. Deuterosome-mediated centriole amplification occurs in terminally differentiated multiciliated cells (G1/0) and not in S phase. Essential for centriole amplification and is required for CEP152 localization to the deuterosome. In Homo sapiens (Human), this protein is Coiled-coil domain-containing protein 78 (CCDC78).